We begin with the raw amino-acid sequence, 370 residues long: Dual-specificity RNA methyltransferase RlmN (370 aa).

Residue Glu-93 is the Proton acceptor of the active site. The 239-residue stretch at 99–337 folds into the Radical SAM core domain; that stretch reads EEGRGTLCVS…VTTVRKTRGD (239 aa). Cys-106 and Cys-343 form a disulfide bridge. Residues Cys-113, Cys-117, and Cys-120 each contribute to the [4Fe-4S] cluster site. S-adenosyl-L-methionine-binding positions include 167–168, Ser-199, 221–223, and Asn-300; these read GE and SLH. Cys-343 acts as the S-methylcysteine intermediate in catalysis.

This sequence belongs to the radical SAM superfamily. RlmN family. [4Fe-4S] cluster is required as a cofactor.

The protein resides in the cytoplasm. It catalyses the reaction adenosine(2503) in 23S rRNA + 2 reduced [2Fe-2S]-[ferredoxin] + 2 S-adenosyl-L-methionine = 2-methyladenosine(2503) in 23S rRNA + 5'-deoxyadenosine + L-methionine + 2 oxidized [2Fe-2S]-[ferredoxin] + S-adenosyl-L-homocysteine. The enzyme catalyses adenosine(37) in tRNA + 2 reduced [2Fe-2S]-[ferredoxin] + 2 S-adenosyl-L-methionine = 2-methyladenosine(37) in tRNA + 5'-deoxyadenosine + L-methionine + 2 oxidized [2Fe-2S]-[ferredoxin] + S-adenosyl-L-homocysteine. Its function is as follows. Specifically methylates position 2 of adenine 2503 in 23S rRNA and position 2 of adenine 37 in tRNAs. m2A2503 modification seems to play a crucial role in the proofreading step occurring at the peptidyl transferase center and thus would serve to optimize ribosomal fidelity. The polypeptide is Dual-specificity RNA methyltransferase RlmN (Francisella tularensis subsp. holarctica (strain FTNF002-00 / FTA)).